Reading from the N-terminus, the 216-residue chain is Nucleoside triphosphate pyrophosphatase (216 aa).

The active-site Proton acceptor is aspartate 82.

This sequence belongs to the Maf family. A divalent metal cation is required as a cofactor.

The protein localises to the cytoplasm. The enzyme catalyses a ribonucleoside 5'-triphosphate + H2O = a ribonucleoside 5'-phosphate + diphosphate + H(+). The catalysed reaction is a 2'-deoxyribonucleoside 5'-triphosphate + H2O = a 2'-deoxyribonucleoside 5'-phosphate + diphosphate + H(+). Its function is as follows. Nucleoside triphosphate pyrophosphatase. May have a dual role in cell division arrest and in preventing the incorporation of modified nucleotides into cellular nucleic acids. The sequence is that of Nucleoside triphosphate pyrophosphatase from Mycobacterium marinum (strain ATCC BAA-535 / M).